A 486-amino-acid chain; its full sequence is FAD-dependent oxidoreductase domain-containing protein 1 (486 aa).

A helical transmembrane segment spans residues 66-86; it reads VVVVGGGVLGLSVAYWLKQLE.

As to quaternary structure, associates with components of the mitochondrial respiratory chain complex I. FAD is required as a cofactor.

It is found in the mitochondrion inner membrane. Its function is as follows. Required for the assembly of the mitochondrial membrane respiratory chain NADH dehydrogenase (Complex I). Involved in mid-late stages of complex I assembly. The polypeptide is FAD-dependent oxidoreductase domain-containing protein 1 (FOXRED1) (Macaca fascicularis (Crab-eating macaque)).